We begin with the raw amino-acid sequence, 540 residues long: 2,3-bisphosphoglycerate-independent phosphoglycerate mutase (540 aa).

Mn(2+) contacts are provided by Asp24 and Ser74. Catalysis depends on Ser74, which acts as the Phosphoserine intermediate. Substrate is bound by residues His135, 165-166, Arg197, Arg203, 268-271, and Lys341; these read RD and RPDR. Mn(2+) is bound by residues Asp408, His412, Asp449, His450, and His467.

The protein belongs to the BPG-independent phosphoglycerate mutase family. In terms of assembly, monomer. Requires Mn(2+) as cofactor.

It catalyses the reaction (2R)-2-phosphoglycerate = (2R)-3-phosphoglycerate. It participates in carbohydrate degradation; glycolysis; pyruvate from D-glyceraldehyde 3-phosphate: step 3/5. Catalyzes the interconversion of 2-phosphoglycerate and 3-phosphoglycerate. The sequence is that of 2,3-bisphosphoglycerate-independent phosphoglycerate mutase from Prochlorococcus marinus (strain MIT 9313).